A 692-amino-acid chain; its full sequence is Elongation factor G (692 aa).

One can recognise a tr-type G domain in the interval 8 to 282 (EKTRNIGIMA…GVVDYLPSPV (275 aa)). Residues 17–24 (AHIDAGKT), 81–85 (DTPGH), and 135–138 (NKMD) contribute to the GTP site.

This sequence belongs to the TRAFAC class translation factor GTPase superfamily. Classic translation factor GTPase family. EF-G/EF-2 subfamily.

The protein resides in the cytoplasm. Catalyzes the GTP-dependent ribosomal translocation step during translation elongation. During this step, the ribosome changes from the pre-translocational (PRE) to the post-translocational (POST) state as the newly formed A-site-bound peptidyl-tRNA and P-site-bound deacylated tRNA move to the P and E sites, respectively. Catalyzes the coordinated movement of the two tRNA molecules, the mRNA and conformational changes in the ribosome. The polypeptide is Elongation factor G (Geobacillus kaustophilus (strain HTA426)).